The chain runs to 476 residues: Calcium/calmodulin-dependent protein kinase type 1G (476 aa).

The region spanning 23–277 is the Protein kinase domain; sequence FIFMEVLGSG…CEKALSHPWI (255 aa). ATP is bound by residues 29–37 and Lys-52; that span reads LGSGAFSEV. Asp-143 (proton acceptor) is an active-site residue. The autoinhibitory domain stretch occupies residues 277 to 317; that stretch reads IDGNTALHRDIYPSVSLQIQKNFAKSKWRQAFNAAAVVHHM. A calmodulin-binding region spans residues 297–318; that stretch reads KNFAKSKWRQAFNAAAVVHHMR. Positions 325-352 are disordered; that stretch reads HSPGVRPEVENRPPETQASETSRPSSPE. Residues 338–352 are compositionally biased toward polar residues; the sequence is PETQASETSRPSSPE.

It belongs to the protein kinase superfamily. CAMK Ser/Thr protein kinase family. CaMK subfamily. In terms of processing, may be prenylated on Cys-473. Mainly expressed in brain with small amounts in skeletal muscles, kidney, spleen and liver. Strongly expressed in forebrain neocortex, striatum and limbic system.

It localises to the cytoplasm. Its subcellular location is the golgi apparatus membrane. The protein resides in the cell membrane. The enzyme catalyses L-seryl-[protein] + ATP = O-phospho-L-seryl-[protein] + ADP + H(+). It carries out the reaction L-threonyl-[protein] + ATP = O-phospho-L-threonyl-[protein] + ADP + H(+). Its activity is regulated as follows. Activated by Ca(2+)/calmodulin. Binding of calmodulin is thought to result in a conformational change and leads to activation through phosphorylation by CAMKK1. Calcium/calmodulin-dependent protein kinase belonging to a proposed calcium-triggered signaling cascade. In vitro phosphorylates transcription factor CREB1. This is Calcium/calmodulin-dependent protein kinase type 1G (CAMK1G) from Homo sapiens (Human).